The primary structure comprises 136 residues: Large ribosomal subunit protein eL27 (136 aa).

The 36-residue stretch at Met5–His40 folds into the KOW domain.

Belongs to the eukaryotic ribosomal protein eL27 family. In terms of assembly, component of the large ribosomal subunit.

The protein localises to the cytoplasm. It is found in the cytosol. Its subcellular location is the rough endoplasmic reticulum. In terms of biological role, component of the large ribosomal subunit. The sequence is that of Large ribosomal subunit protein eL27 (rpl27) from Ictalurus punctatus (Channel catfish).